The sequence spans 1005 residues: MDVRCINWFESHGENRFLYLKSRCRNGETVFIRFPHYFYYVVTDEIYQSLAPPPFNARPMGKMRTIDIDETISYNLDIKDRKCSVADMWLIEEPKKRNIQNATMDEFLNISWFYISNGISPDGCYSLDDQYLTKINNGCYHCGDPRNCFAKEIPRFDIPRSYLFLDIECHFDKKFPSVFINPISHTSYCYIDLSGKRLLFTLINEEMLTEQEIQEAVDRGCLRIQSLMEMDYERELVLCSEIVLLQIAKQLLELTFDYIVTFNGHNFDLRYITNRLELLTGEKIIFRSPDKKEAVHLCIYERNQSSHKGVGGMANTTFHVNNNNGTIFFDLYSFIQKSEKLDSYKLDSISKNAFSCMGKVLNRGVREMTFIGDDTTDAKGKAAVFAKVLTTGNYVTVDDIICKVIHKDIWENGFKVVLSCPTLTNDTYKLSFGKDDVDLAQMYKDYNLNIALDMARYCIHDACLCQYLWEYYGVETKTDAGASTYVLPQSMVFGYKASTVIKGPLLKLLLETKTILVRSETKQKFPYEGGKVFAPKQKMFSNNVLIFDYNSLYPNVCIFGNLSPETLVGVVVSSNRLEEEINNQLLLQKYPPPRYITVHCEPRLPNLISEIAIFDRSIEGTIPRLLRTFLAERARYKKMLKQATSSTEKAIYDSMQYTYKIIANSVYGLMGFRNSALYSYASAKSCTSIGRRMILYLESVLNGAELSNGMLRFANPLSNPFYMDDRDINPIVKTSLPIDYRFRFRSVYGDTDSVFTEIDSQDVDKSIEIAKELERLINSRVLFNNFKIEFEAVYKNLIMQSKKKYTTMKYSASSNSKSVPERINKGTSETRRDVSKFHKNMIKIYKTRLSEMLSEGRMNSNQVCIDILRSLETDLRSEFDSRSSPLELFMLSRMHHLNYKSADNPNMYLVTEYNKNNPETIELGERYYFAYICPANVPWTKKLVNIKTYETIIDRSFKLGSDQRIFYEVYFKRLTSEIVNLLDNKVLCISFFERMFGSRPTFYEA.

Belongs to the DNA polymerase type-B family. Interacts with OPG148. Component of the Uracil-DNA glycosylase(UDG)-OPG148-polymerase complex; OPG148 and OPG116/UDG form a heterodimeric processivity factor that associates with OPG071 to form the processive polymerase holoenzyme.

The enzyme catalyses DNA(n) + a 2'-deoxyribonucleoside 5'-triphosphate = DNA(n+1) + diphosphate. In terms of biological role, catalyzes DNA synthesis. Acquires processivity by associating with a heterodimeric processivity factor comprised of the viral OPG148 and OPG116 proteins, thereby forming the DNA polymerase holoenzyme. Displays 3'- to 5' exonuclease activity. Might participate in viral DNA recombination. Does not perform OPG116/D4synthesis across an abasic site. This Variola virus (isolate Human/India/Ind3/1967) (VARV) protein is DNA polymerase (OPG071).